The sequence spans 165 residues: Lipoprotein signal peptidase (165 aa).

2 helical membrane passes run 68-88 and 100-120; these read PLLP…GLFG and GFLL…GEVI. Catalysis depends on residues D121 and D137. The helical transmembrane segment at 130 to 150 threads the bilayer; that stretch reads FPVFNIADISINVGLACLIFA.

It belongs to the peptidase A8 family.

It is found in the cell inner membrane. It catalyses the reaction Release of signal peptides from bacterial membrane prolipoproteins. Hydrolyzes -Xaa-Yaa-Zaa-|-(S,diacylglyceryl)Cys-, in which Xaa is hydrophobic (preferably Leu), and Yaa (Ala or Ser) and Zaa (Gly or Ala) have small, neutral side chains.. Its pathway is protein modification; lipoprotein biosynthesis (signal peptide cleavage). In terms of biological role, this protein specifically catalyzes the removal of signal peptides from prolipoproteins. In Acaryochloris marina (strain MBIC 11017), this protein is Lipoprotein signal peptidase.